Consider the following 254-residue polypeptide: Very-long-chain (3R)-3-hydroxyacyl-CoA dehydratase 2 (254 aa).

The residue at position 2 (Ala2) is an N-acetylalanine. The Cytoplasmic segment spans residues 2 to 41 (AAVAATAAAKGNGGGGGRAGAGDASGTRKKKGPGPLATAY). The segment at 11–33 (KGNGGGGGRAGAGDASGTRKKKG) is disordered. A compositionally biased stretch (gly residues) spans 12–21 (GNGGGGGRAG). The chain crosses the membrane as a helical span at residues 42–60 (LVIYNVVMTAGWLVIAVGL). Residues 61-79 (VRAYLAKGSYHSLYYSIEK) are Lumenal-facing. The helical transmembrane segment at 80–97 (PLKFFQTGALLEILHCAI) threads the bilayer. Residues 98 to 107 (GIVPSSVVLT) lie on the Cytoplasmic side of the membrane. Residues 108 to 125 (SFQVMSRVFLIWAVTHSV) traverse the membrane as a helical segment. At 126–130 (KEVQS) the chain is on the lumenal side. Residues 131–146 (EDSVLLFVIAWTITEI) form a helical membrane-spanning segment. The Cytoplasmic portion of the chain corresponds to 147-169 (IRYSFYTFSLLNHLPYLIKWARY). Residues 170-187 (TLFIVLYPMGVSGELLTI) form a helical membrane-spanning segment. Active-site residues include Tyr176 and Glu183. Topologically, residues 188-217 (YAALPFVRQAGLYSISLPNKYNFSFDYYAF) are lumenal. The tract at residues 198–214 (GLYSISLPNKYNFSFDY) is may be involved in interaction with TECR. The N-linked (GlcNAc...) asparagine glycan is linked to Asn209. The helical transmembrane segment at 218-235 (LILIMISYIPIFPQLYFH) threads the bilayer. The Cytoplasmic segment spans residues 236–254 (MIHQRRKILSHTEEHKKFE).

Belongs to the very long-chain fatty acids dehydratase HACD family. In terms of assembly, may interact with enzymes of the ELO family (including ELOVL1); with those enzymes that mediate condensation, the first of the four steps of the reaction cycle responsible for fatty acids elongation, may be part of a larger fatty acids elongase complex. Interacts with BCAP31. Interacts (via the third lumenal loop) with TECR. As to expression, highly expressed in testis, spleen, prostate, colon and heart, followed by moderate expression in thymus, ovary, small intestine, peripheral blood leukocytes, liver, skeletal muscle and pancreas. Weakly detected in kidney, placenta, brain and lung.

It is found in the endoplasmic reticulum membrane. It catalyses the reaction a very-long-chain (3R)-3-hydroxyacyl-CoA = a very-long-chain (2E)-enoyl-CoA + H2O. It carries out the reaction (3R)-hydroxyhexadecanoyl-CoA = (2E)-hexadecenoyl-CoA + H2O. The catalysed reaction is (3R)-hydroxyoctadecanoyl-CoA = (2E)-octadecenoyl-CoA + H2O. The enzyme catalyses (3R)-hydroxyeicosanoyl-CoA = (2E)-eicosenoyl-CoA + H2O. It catalyses the reaction (3R)-hydroxydocosanoyl-CoA = (2E)-docosenoyl-CoA + H2O. It carries out the reaction (3R)-hydroxytetracosanoyl-CoA = (2E)-tetracosenoyl-CoA + H2O. The catalysed reaction is (3R)-hydroxyhexacosanoyl-CoA = (2E)-hexacosenoyl-CoA + H2O. It functions in the pathway lipid metabolism; fatty acid biosynthesis. Its function is as follows. Catalyzes the third of the very long-chain fatty acids (VLCFA) elongation four-step cycle (condensation, reduction, dehydration, and reduction). This endoplasmic reticulum-elongation process is characterized by the addition of two carbons to the lipid chain through each cycle. This enzyme catalyzes the dehydration of the 3-hydroxyacyl-CoA intermediate into trans-2,3-enoyl-CoA, within each cycle of elongation. Therefore, it participates in the production of various VLCFAs involved in multiple biological processes as precursors of membrane lipids and lipid mediators. The sequence is that of Very-long-chain (3R)-3-hydroxyacyl-CoA dehydratase 2 from Homo sapiens (Human).